We begin with the raw amino-acid sequence, 185 residues long: Pyruvate/ketoisovalerate oxidoreductases common subunit gamma (185 aa).

As to quaternary structure, heterotetramer of one alpha, one beta, one delta and one gamma chain.

It carries out the reaction 2 oxidized [2Fe-2S]-[ferredoxin] + pyruvate + CoA = 2 reduced [2Fe-2S]-[ferredoxin] + acetyl-CoA + CO2 + H(+). The catalysed reaction is 3-methyl-2-oxobutanoate + 2 oxidized [2Fe-2S]-[ferredoxin] + CoA = 2-methylpropanoyl-CoA + 2 reduced [2Fe-2S]-[ferredoxin] + CO2 + H(+). This Pyrococcus furiosus (strain ATCC 43587 / DSM 3638 / JCM 8422 / Vc1) protein is Pyruvate/ketoisovalerate oxidoreductases common subunit gamma (porG).